The primary structure comprises 235 residues: UPF0173 metal-dependent hydrolase mll0680 (235 aa).

This sequence belongs to the UPF0173 family.

This is UPF0173 metal-dependent hydrolase mll0680 from Mesorhizobium japonicum (strain LMG 29417 / CECT 9101 / MAFF 303099) (Mesorhizobium loti (strain MAFF 303099)).